The primary structure comprises 325 residues: tRNA U34 carboxymethyltransferase (325 aa).

Carboxy-S-adenosyl-L-methionine is bound by residues Lys-91, Trp-105, Lys-110, Gly-130, 152–154 (DPS), Met-196, Tyr-200, and Arg-315.

Belongs to the class I-like SAM-binding methyltransferase superfamily. CmoB family. Homotetramer.

It catalyses the reaction carboxy-S-adenosyl-L-methionine + 5-hydroxyuridine(34) in tRNA = 5-carboxymethoxyuridine(34) in tRNA + S-adenosyl-L-homocysteine + H(+). Functionally, catalyzes carboxymethyl transfer from carboxy-S-adenosyl-L-methionine (Cx-SAM) to 5-hydroxyuridine (ho5U) to form 5-carboxymethoxyuridine (cmo5U) at position 34 in tRNAs. The polypeptide is tRNA U34 carboxymethyltransferase (Aeromonas salmonicida (strain A449)).